Consider the following 300-residue polypeptide: Formate dehydrogenase-O iron-sulfur subunit (300 aa).

The Cytoplasmic segment spans residues 1 to 260; that stretch reads MAYQSQDIIR…KFWKGIWKPL (260 aa). 4 consecutive 4Fe-4S ferredoxin-type domains span residues 30–60, 91–123, 124–153, and 158–189; these read VAKLIDVTTCIGCKACQVACSEWNDIRDTVG, LEWLIRKDGCMHCSDPGCLKACPAEGAIIQYAN, GIVDFQSEQCIGCGYCIAGCPFDIPRLNPE, and YKCTLCVDRVVVGQEPACVKTCPTGAIHFGTK. Residues C39, C42, C45, C49, C100, C103, C108, C112, C133, C136, C139, C143, C160, C163, C175, and C179 each coordinate [4Fe-4S] cluster. Residues 261–279 form a helical membrane-spanning segment; the sequence is AAVGFAATFAASIFHYVGV. At 280–300 the chain is on the periplasmic side; sequence GPNRADEEENNLHEEKDEERK.

In terms of assembly, formate dehydrogenase is a membrane-bound complex, formed by subunits alpha, beta and gamma. It depends on [4Fe-4S] cluster as a cofactor.

It localises to the cell membrane. Functionally, allows to use formate as major electron donor during aerobic respiration. The beta chain is an electron transfer unit containing 4 cysteine clusters involved in the formation of iron-sulfur centers. Electrons are transferred from the gamma chain to the molybdenum cofactor of the alpha subunit. The protein is Formate dehydrogenase-O iron-sulfur subunit (fdoH) of Escherichia coli (strain K12).